Reading from the N-terminus, the 316-residue chain is tRNA dimethylallyltransferase (316 aa).

17 to 24 (GPTASGKT) serves as a coordination point for ATP. 19–24 (TASGKT) serves as a coordination point for substrate. 3 interaction with substrate tRNA regions span residues 42–45 (DSAL), 166–170 (QRLSR), and 247–252 (RCVGYR).

It belongs to the IPP transferase family. Monomer. Mg(2+) is required as a cofactor.

The catalysed reaction is adenosine(37) in tRNA + dimethylallyl diphosphate = N(6)-dimethylallyladenosine(37) in tRNA + diphosphate. Catalyzes the transfer of a dimethylallyl group onto the adenine at position 37 in tRNAs that read codons beginning with uridine, leading to the formation of N6-(dimethylallyl)adenosine (i(6)A). The protein is tRNA dimethylallyltransferase of Salmonella schwarzengrund (strain CVM19633).